Reading from the N-terminus, the 714-residue chain is DNA ligase (714 aa).

NAD(+) contacts are provided by residues 59-63 (DYEYD), 108-109 (SL), and Glu139. Lys141 serves as the catalytic N6-AMP-lysine intermediate. Residues Arg162, Glu200, Lys325, and Lys349 each coordinate NAD(+). 4 residues coordinate Zn(2+): Cys443, Cys446, Cys461, and Cys466. The region spanning 624–713 (VVENIFEGKT…IPDDLKDKVH (90 aa)) is the BRCT domain.

Belongs to the NAD-dependent DNA ligase family. LigA subfamily. It depends on Mg(2+) as a cofactor. Requires Mn(2+) as cofactor.

It catalyses the reaction NAD(+) + (deoxyribonucleotide)n-3'-hydroxyl + 5'-phospho-(deoxyribonucleotide)m = (deoxyribonucleotide)n+m + AMP + beta-nicotinamide D-nucleotide.. Its function is as follows. DNA ligase that catalyzes the formation of phosphodiester linkages between 5'-phosphoryl and 3'-hydroxyl groups in double-stranded DNA using NAD as a coenzyme and as the energy source for the reaction. It is essential for DNA replication and repair of damaged DNA. The polypeptide is DNA ligase (Persephonella marina (strain DSM 14350 / EX-H1)).